Here is an 887-residue protein sequence, read N- to C-terminus: Translation initiation factor IF-2 (887 aa).

Positions 1–259 (MSDEQDQGET…KVGDDRRRGA (259 aa)) are disordered. Positions 62-94 (GRPSAPSRASGGAAAPRGLTAAEQAARQRAVVE) are enriched in low complexity. Basic and acidic residues-rich tracts occupy residues 95–111 (QQRE…EQEK) and 119–158 (EEAR…RRAA). Low complexity predominate over residues 159 to 210 (EASQATAAPPAPAAAASPRAAMPAPTAAPARPGAAPARRTAPVPPATSASET). The span at 250–259 (KVGDDRRRGA) shows a compositional bias: basic and acidic residues. Residues 386–556 (VRPPVVTIMG…LLQAELLDLK (171 aa)) form the tr-type G domain. The G1 stretch occupies residues 395-402 (GHVDHGKT). 395–402 (GHVDHGKT) is a GTP binding site. The segment at 420-424 (GITQH) is G2. The segment at 442-445 (DTPG) is G3. GTP contacts are provided by residues 442–446 (DTPGH) and 496–499 (NKID). The tract at residues 496 to 499 (NKID) is G4. The G5 stretch occupies residues 532–534 (SAL).

Belongs to the TRAFAC class translation factor GTPase superfamily. Classic translation factor GTPase family. IF-2 subfamily.

The protein localises to the cytoplasm. Its function is as follows. One of the essential components for the initiation of protein synthesis. Protects formylmethionyl-tRNA from spontaneous hydrolysis and promotes its binding to the 30S ribosomal subunits. Also involved in the hydrolysis of GTP during the formation of the 70S ribosomal complex. In Acidiphilium cryptum (strain JF-5), this protein is Translation initiation factor IF-2.